Reading from the N-terminus, the 54-residue chain is U7-ctenitoxin-Pk1a (54 aa).

Intrachain disulfides connect C3–C17, C10–C23, C14–C52, C16–C37, and C25–C35.

Expressed by the venom gland.

It localises to the secreted. Blocks voltage-gated sodium channels (Nav). Causes immediate spastic paralysis and death in mice within 1 minute of injection at dose levels of 1.5 ug per mouse. The polypeptide is U7-ctenitoxin-Pk1a (Phoneutria keyserlingi (Brazilian wandering spider)).